Reading from the N-terminus, the 25-residue chain is Endoglucanase 1 (25 aa).

The tract at residues 1–25 is disordered; sequence YDASLKPNLQIPQKNIPNNDAVNIK. Residues 10–25 show a composition bias toward polar residues; sequence QIPQKNIPNNDAVNIK.

The catalysed reaction is Endohydrolysis of (1-&gt;4)-beta-D-glucosidic linkages in cellulose, lichenin and cereal beta-D-glucans.. In terms of biological role, this enzyme hydrolyzes cellotetraose, cellopentaose, and cellohexaose to cellobiose and cellotriose but does not hydrolyze cellobiose or cellotriose. The polypeptide is Endoglucanase 1 (Ruminiclostridium josui (Clostridium josui)).